Reading from the N-terminus, the 237-residue chain is MDNLKTSVHEIYLSLSGEGISTGIPTIFVRMAGCSLRCGMTVGRKLWCDTPYALSPKAGEEMSVNQVLDKIQELSAVNIQILLTGGEPLEGRNREFSITLGNEIFRIRNSSGFYPRPRVETNGAESIEGMDQFVFTLDYKLPGSGMEDRMNLKNLEIYKERKNPLDEIKFVIRDKNDFERCLEIIEKHALVGNLLASPVQGELSPEILAEWIKYSLGSGLRLSIQTHKYIWGDQRGV.

Substrate-binding positions include 15–17 (LSG) and arginine 30. A Radical SAM core domain is found at 21–233 (STGIPTIFVR…IQTHKYIWGD (213 aa)). [4Fe-4S] cluster-binding residues include cysteine 34, cysteine 38, and cysteine 48. Residue threonine 50 participates in Mg(2+) binding. Residue threonine 84 participates in substrate binding. Glycine 86 is an S-adenosyl-L-methionine binding site.

It belongs to the radical SAM superfamily. 7-carboxy-7-deazaguanine synthase family. As to quaternary structure, homodimer. The cofactor is [4Fe-4S] cluster. Requires S-adenosyl-L-methionine as cofactor. It depends on Mg(2+) as a cofactor.

It carries out the reaction 6-carboxy-5,6,7,8-tetrahydropterin + H(+) = 7-carboxy-7-deazaguanine + NH4(+). The protein operates within purine metabolism; 7-cyano-7-deazaguanine biosynthesis. Its function is as follows. Catalyzes the complex heterocyclic radical-mediated conversion of 6-carboxy-5,6,7,8-tetrahydropterin (CPH4) to 7-carboxy-7-deazaguanine (CDG), a step common to the biosynthetic pathways of all 7-deazapurine-containing compounds. This is 7-carboxy-7-deazaguanine synthase from Leptospira interrogans serogroup Icterohaemorrhagiae serovar Lai (strain 56601).